The primary structure comprises 264 residues: Thiazole synthase (264 aa).

Lys-101 serves as the catalytic Schiff-base intermediate with DXP. 1-deoxy-D-xylulose 5-phosphate contacts are provided by residues Gly-162, 188-189, and 210-211; these read AG and NT.

Belongs to the ThiG family. As to quaternary structure, homotetramer. Forms heterodimers with either ThiH or ThiS.

It is found in the cytoplasm. It catalyses the reaction [ThiS sulfur-carrier protein]-C-terminal-Gly-aminoethanethioate + 2-iminoacetate + 1-deoxy-D-xylulose 5-phosphate = [ThiS sulfur-carrier protein]-C-terminal Gly-Gly + 2-[(2R,5Z)-2-carboxy-4-methylthiazol-5(2H)-ylidene]ethyl phosphate + 2 H2O + H(+). Its pathway is cofactor biosynthesis; thiamine diphosphate biosynthesis. In terms of biological role, catalyzes the rearrangement of 1-deoxy-D-xylulose 5-phosphate (DXP) to produce the thiazole phosphate moiety of thiamine. Sulfur is provided by the thiocarboxylate moiety of the carrier protein ThiS. In vitro, sulfur can be provided by H(2)S. This is Thiazole synthase from Chromobacterium violaceum (strain ATCC 12472 / DSM 30191 / JCM 1249 / CCUG 213 / NBRC 12614 / NCIMB 9131 / NCTC 9757 / MK).